The primary structure comprises 684 residues: Glycine--tRNA ligase beta subunit (684 aa).

This sequence belongs to the class-II aminoacyl-tRNA synthetase family. In terms of assembly, tetramer of two alpha and two beta subunits.

It is found in the cytoplasm. The enzyme catalyses tRNA(Gly) + glycine + ATP = glycyl-tRNA(Gly) + AMP + diphosphate. This chain is Glycine--tRNA ligase beta subunit, found in Pseudomonas aeruginosa (strain ATCC 15692 / DSM 22644 / CIP 104116 / JCM 14847 / LMG 12228 / 1C / PRS 101 / PAO1).